Consider the following 141-residue polypeptide: Large ribosomal subunit protein uL11 (141 aa).

Belongs to the universal ribosomal protein uL11 family. In terms of assembly, part of the ribosomal stalk of the 50S ribosomal subunit. Interacts with L10 and the large rRNA to form the base of the stalk. L10 forms an elongated spine to which L12 dimers bind in a sequential fashion forming a multimeric L10(L12)X complex. One or more lysine residues are methylated.

Forms part of the ribosomal stalk which helps the ribosome interact with GTP-bound translation factors. This Synechococcus sp. (strain JA-3-3Ab) (Cyanobacteria bacterium Yellowstone A-Prime) protein is Large ribosomal subunit protein uL11.